The following is a 287-amino-acid chain: Large ribosomal subunit protein uL2 (287 aa).

Residues 214 to 287 form a disordered region; the sequence is LGRRPEVRGS…SKRGRGGRDA (74 aa). The segment covering 271–287 has biased composition (basic residues); that stretch reads QRRRRKSSKRGRGGRDA.

This sequence belongs to the universal ribosomal protein uL2 family. As to quaternary structure, part of the 50S ribosomal subunit. Forms a bridge to the 30S subunit in the 70S ribosome.

In terms of biological role, one of the primary rRNA binding proteins. Required for association of the 30S and 50S subunits to form the 70S ribosome, for tRNA binding and peptide bond formation. It has been suggested to have peptidyltransferase activity; this is somewhat controversial. Makes several contacts with the 16S rRNA in the 70S ribosome. This Synechococcus elongatus (strain ATCC 33912 / PCC 7942 / FACHB-805) (Anacystis nidulans R2) protein is Large ribosomal subunit protein uL2.